Consider the following 135-residue polypeptide: Fluoride-specific ion channel FluC 2 (135 aa).

The next 4 helical transmembrane spans lie at 5–25 (VLAAVAAGGALGALARAGLLA), 36–56 (WGTVLVNVLGCALIGVLMETL), 68–88 (PFLGVGVLGGFTTFSAAITDA), and 100–120 (ALLAIAANLIGALLAVSAAAG). Na(+) contacts are provided by Gly-76 and Thr-79.

This sequence belongs to the fluoride channel Fluc/FEX (TC 1.A.43) family.

It is found in the cell membrane. It carries out the reaction fluoride(in) = fluoride(out). With respect to regulation, na(+) is not transported, but it plays an essential structural role and its presence is essential for fluoride channel function. Fluoride-specific ion channel. Important for reducing fluoride concentration in the cell, thus reducing its toxicity. This is Fluoride-specific ion channel FluC 2 from Thermobifida fusca (strain YX).